Reading from the N-terminus, the 637-residue chain is Rab11 family-interacting protein 4 (637 aa).

The 36-residue stretch at 49–84 folds into the EF-hand domain; that stretch reads GQGEEVEKLVKYLDPNDLGRINFKDFCRGVFAMKGC. The Ca(2+) site is built by aspartate 62, asparagine 64, arginine 68, and aspartate 73. Positions 82–637 are necessary for interaction with RAB11A, subcellular location, homo- or heterooligomerization; sequence KGCEELLKDV…HNPSILEIKH (556 aa). Disordered stretches follow at residues 138–175 and 219–256; these read EEEAMTLAPPEGPQELYTDSPMESTQSLEGSVGSPAEK and YGEGDDVDCAPSSPCPDDETRTNVYSDLGSSVSSSAGQ. The stretch at 280–617 forms a coiled coil; that stretch reads KINLLNDLEA…EEINFRLRQY (338 aa). In terms of domain architecture, FIP-RBD spans 574–636; that stretch reads EAKNLFAAQT…DHNPSILEIK (63 aa).

As to quaternary structure, homodimer. Forms a complex with Rab11 (RAB11A or RAB11B) and ARF6. Interacts with RAB11A; the interaction is direct. Forms a heterooligomeric complex with RAB11FIP2, RAB11FIP3 and RAB11FIP5. Interacts with ECPAS. In terms of assembly, (Microbial infection) Interacts with human cytomegalovirus/HHV-5 protein gM/UL100. As to expression, present at high level in testis (at protein level). Weakly expressed in other tissues.

It localises to the endosome. It is found in the cytoplasm. The protein localises to the cytoskeleton. Its subcellular location is the spindle. The protein resides in the microtubule organizing center. It localises to the centrosome. It is found in the recycling endosome membrane. The protein localises to the cleavage furrow. Its subcellular location is the midbody. The protein resides in the cytoplasmic vesicle. Acts as a regulator of endocytic traffic by participating in membrane delivery. Required for the abscission step in cytokinesis, possibly by acting as an 'address tag' delivering recycling endosome membranes to the cleavage furrow during late cytokinesis. In case of infection by HCMV (human cytomegalovirus), may participate in egress of the virus out of nucleus; this function is independent of ARF6. This Homo sapiens (Human) protein is Rab11 family-interacting protein 4 (RAB11FIP4).